The chain runs to 111 residues: uncharacterized protein (111 aa).

A lipid anchor (N-myristoyl glycine; by host) is attached at Gly-2.

This is an uncharacterized protein from Acanthamoeba polyphaga mimivirus (APMV).